Here is a 101-residue protein sequence, read N- to C-terminus: Conopressin/conophysin, isoform 3 (101 aa).

Residue alanine 1 is a signal peptide. A disulfide bridge connects residues cysteine 2 and cysteine 7. Residue glycine 10 is modified to Glycine amide. Residues 11–18 (GKRNVDEG) constitute a propeptide that is removed on maturation. 7 cysteine pairs are disulfide-bonded: cysteine 23-cysteine 63, cysteine 26-cysteine 37, cysteine 31-cysteine 53, cysteine 38-cysteine 43, cysteine 70-cysteine 88, cysteine 82-cysteine 100, and cysteine 89-cysteine 94.

The protein belongs to the vasopressin/oxytocin family. In terms of tissue distribution, expressed by the venom gland.

The protein resides in the secreted. Its function is as follows. Targets vasopressin-oxytocin related receptors. Is more active on fish receptors than on their human counterparts, supporting an evolved role of this conopressin in the envenomation process. Acts as an agonist on zebrafish vasopressin receptors V1a1R (EC(50)=10.6 nM), V1a2R (EC(50)=44.06 nM, partial agonist), V2R (EC(50)=299.2 nM) and oxytocin receptor (EC(50)=353.73 nM, partial agonist). Shows a weaker activity on human receptors AVPR1B (EC(50)=51.92 nM), AVPR1A (EC(50)=123.78 nM), AVPR2 (EC(50)=299.2 nM) and oxytocin (OXTR) receptor (EC(50)=455.66 nM, partial agonist). In vivo, exhibits grooming and scratching behavior in mice, following intracerebral injection. In Conus monile (Necklace cone), this protein is Conopressin/conophysin, isoform 3.